The following is a 394-amino-acid chain: MFCPLKLILLPVLLDYSLGLNDLNVSPPELTVHVGDSALMGCVFQSTEDKCIFKIDWTLSPGEHAKDEYVLYYYSNLSVPIGRFQNRVHLMGDILCNDGSLLLQDVQEADQGTYICEIRLKGESQVFKKAVVLHVLPEEPKELMVHVGGLIQMGCVFQSTEVKHVTKVEWIFSGRRAKEEIVFRYYHKLRMSVEYSQSWGHFQNRVNLVGDIFRNDGSIMLQGVRESDGGNYTCSIHLGNLVFKKTIVLHVSPEEPRTLVTPAALRPLVLGGNQLVIIVGIVCATILLLPVLILIVKKTCGNKSSVNSTVLVKNTKKTNPEIKEKPCHFERCEGEKHIYSPIIVREVIEEEEPSEKSEATYMTMHPVWPSLRSDRNNSLEKKSGGGMPKTQQAF.

An N-terminal signal peptide occupies residues 1 to 19 (MFCPLKLILLPVLLDYSLG). Ig-like V-type domains follow at residues 20–132 (LNDL…KAVV) and 137–250 (PEEP…IVLH). Residues 20 to 275 (LNDLNVSPPE…RPLVLGGNQL (256 aa)) are Extracellular-facing. Disulfide bonds link Cys42/Cys116 and Cys155/Cys234. Residues Asn76 and Asn231 are each glycosylated (N-linked (GlcNAc...) asparagine). A helical transmembrane segment spans residues 276–296 (VIIVGIVCATILLLPVLILIV). Residues 297–394 (KKTCGNKSSV…GGMPKTQQAF (98 aa)) lie on the Cytoplasmic side of the membrane. Positions 369-394 (PSLRSDRNNSLEKKSGGGMPKTQQAF) are disordered. The segment covering 372–383 (RSDRNNSLEKKS) has biased composition (basic and acidic residues).

The protein belongs to the immunoglobulin superfamily. As to quaternary structure, homodimer; active form in leukocyte-endothelial cell adhesion. Interacts (homodimeric form) with CXADR. Interacts (via cytoplasmic domain) with the PI3 kinase; upon CXADR-binding. Interacts with ITGA4 and ITGB1; integrin alpha-4/beta-1 may regulate leukocyte to endothelial cells adhesion by controlling JAML homodimerization. As to expression, expression is restricted to the hematopoietic tissues with the exception of liver. Expressed in fetal liver, spleen and thymus. Preferentially expressed by mature leukocytes (at protein level).

It is found in the cell membrane. It localises to the cell junction. Functionally, transmembrane protein of the plasma membrane of leukocytes that control their migration and activation through interaction with CXADR, a plasma membrane receptor found on adjacent epithelial and endothelial cells. The interaction between both receptors mediates the activation of gamma-delta T-cells, a subpopulation of T-cells residing in epithelia and involved in tissue homeostasis and repair. Upon epithelial CXADR-binding, JAML induces downstream cell signaling events in gamma-delta T-cells through PI3-kinase and MAP kinases. It results in proliferation and production of cytokines and growth factors by T-cells that in turn stimulate epithelial tissues repair. It also controls the transmigration of leukocytes within epithelial and endothelial tissues through adhesive interactions with epithelial and endothelial CXADR. The protein is Junctional adhesion molecule-like of Homo sapiens (Human).